We begin with the raw amino-acid sequence, 262 residues long: Lysosomal-associated transmembrane protein 5 (262 aa).

The next 5 membrane-spanning stretches (helical) occupy residues 19 to 39 (IATTALAIYHVIMSVLLFIEH), 64 to 84 (ISSFLLIAMLFIISLSLLIGV), 92 to 112 (LLPFLSLQVMDYLLCLLTLLG), 134 to 154 (FPLMTLQLLDFCLSILTLCSS), and 184 to 204 (FIKMMIIFSIAFITVLIFKVY). Tyrosine 259 bears the Phosphotyrosine mark.

The protein belongs to the LAPTM4/LAPTM5 transporter family. As to quaternary structure, binds to ubiquitin.

It is found in the lysosome membrane. Its function is as follows. May have a special functional role during embryogenesis and in adult hematopoietic cells. This chain is Lysosomal-associated transmembrane protein 5 (LAPTM5), found in Pongo abelii (Sumatran orangutan).